Reading from the N-terminus, the 431-residue chain is Serine--tRNA ligase (431 aa).

Residue 235 to 237 (TAE) coordinates L-serine. ATP contacts are provided by residues 266–268 (RRE) and V282. E289 serves as a coordination point for L-serine. ATP is bound at residue 353–356 (EASS). S389 provides a ligand contact to L-serine.

This sequence belongs to the class-II aminoacyl-tRNA synthetase family. Type-1 seryl-tRNA synthetase subfamily. In terms of assembly, homodimer. The tRNA molecule binds across the dimer.

It localises to the cytoplasm. It carries out the reaction tRNA(Ser) + L-serine + ATP = L-seryl-tRNA(Ser) + AMP + diphosphate + H(+). The enzyme catalyses tRNA(Sec) + L-serine + ATP = L-seryl-tRNA(Sec) + AMP + diphosphate + H(+). It functions in the pathway aminoacyl-tRNA biosynthesis; selenocysteinyl-tRNA(Sec) biosynthesis; L-seryl-tRNA(Sec) from L-serine and tRNA(Sec): step 1/1. In terms of biological role, catalyzes the attachment of serine to tRNA(Ser). Is also able to aminoacylate tRNA(Sec) with serine, to form the misacylated tRNA L-seryl-tRNA(Sec), which will be further converted into selenocysteinyl-tRNA(Sec). This is Serine--tRNA ligase from Pelodictyon phaeoclathratiforme (strain DSM 5477 / BU-1).